The sequence spans 226 residues: Urease accessory protein UreF (226 aa).

It belongs to the UreF family. In terms of assembly, ureD, UreF and UreG form a complex that acts as a GTP-hydrolysis-dependent molecular chaperone, activating the urease apoprotein by helping to assemble the nickel containing metallocenter of UreC. The UreE protein probably delivers the nickel.

It localises to the cytoplasm. Its function is as follows. Required for maturation of urease via the functional incorporation of the urease nickel metallocenter. This is Urease accessory protein UreF from Burkholderia lata (strain ATCC 17760 / DSM 23089 / LMG 22485 / NCIMB 9086 / R18194 / 383).